We begin with the raw amino-acid sequence, 348 residues long: Dihydroorotase (348 aa).

Residues His17 and His19 each contribute to the Zn(2+) site. Substrate contacts are provided by residues His19–Arg21 and Asn45. Zn(2+) is bound by residues Lys103, His140, and His178. N6-carboxylysine is present on Lys103. His140 contributes to the substrate binding site. Substrate is bound at residue Leu223. Asp251 contributes to the Zn(2+) binding site. Asp251 is an active-site residue. 2 residues coordinate substrate: His255 and Ala267.

It belongs to the metallo-dependent hydrolases superfamily. DHOase family. Class II DHOase subfamily. In terms of assembly, homodimer. Requires Zn(2+) as cofactor.

The enzyme catalyses (S)-dihydroorotate + H2O = N-carbamoyl-L-aspartate + H(+). The protein operates within pyrimidine metabolism; UMP biosynthesis via de novo pathway; (S)-dihydroorotate from bicarbonate: step 3/3. Functionally, catalyzes the reversible cyclization of carbamoyl aspartate to dihydroorotate. This Shigella boydii serotype 18 (strain CDC 3083-94 / BS512) protein is Dihydroorotase.